The chain runs to 84 residues: U8-theraphotoxin-Hhn1c 1 (84 aa).

Positions 1–21 (MKVVLIVCLVWVMAMMELVSC) are cleaved as a signal peptide. Intrachain disulfides connect Cys-23–Cys-35, Cys-29–Cys-44, Cys-34–Cys-67, Cys-54–Cys-75, and Cys-69–Cys-81.

Belongs to the AVIT (prokineticin) family. In terms of tissue distribution, expressed by the venom gland.

It localises to the secreted. The sequence is that of U8-theraphotoxin-Hhn1c 1 from Cyriopagopus hainanus (Chinese bird spider).